A 494-amino-acid chain; its full sequence is Guanosine-5'-triphosphate,3'-diphosphate pyrophosphatase (494 aa).

It belongs to the GppA/Ppx family. GppA subfamily.

The catalysed reaction is guanosine 3'-diphosphate 5'-triphosphate + H2O = guanosine 3',5'-bis(diphosphate) + phosphate + H(+). It functions in the pathway purine metabolism; ppGpp biosynthesis; ppGpp from GTP: step 2/2. Functionally, catalyzes the conversion of pppGpp to ppGpp. Guanosine pentaphosphate (pppGpp) is a cytoplasmic signaling molecule which together with ppGpp controls the 'stringent response', an adaptive process that allows bacteria to respond to amino acid starvation, resulting in the coordinated regulation of numerous cellular activities. The sequence is that of Guanosine-5'-triphosphate,3'-diphosphate pyrophosphatase from Escherichia coli O139:H28 (strain E24377A / ETEC).